Reading from the N-terminus, the 87-residue chain is U3-theraphotoxin-Hhn1i (87 aa).

An N-terminal signal peptide occupies residues 1–24 (MVNMEASMFLTFAGLVLLFVVCYA). A propeptide spanning residues 25-52 (SESEEKEFPKEMLSSIFAVDNDFKQEER) is cleaved from the precursor. Disulfide bonds link Cys54/Cys67, Cys61/Cys72, and Cys66/Cys79.

It belongs to the neurotoxin 10 (Hwtx-1) family. 51 (Hntx-8) subfamily. Hntx-8 sub-subfamily. In terms of tissue distribution, expressed by the venom gland.

The protein resides in the secreted. Its function is as follows. Ion channel inhibitor. This is U3-theraphotoxin-Hhn1i from Cyriopagopus hainanus (Chinese bird spider).